A 31-amino-acid chain; its full sequence is Cyclotide cter-J (31 aa).

The cyclopeptide (Gly-Asp) cross-link spans 1–31 (GTVPCGESCVFIPCITGIAGCSCKNKVCYID). Intrachain disulfides connect cysteine 5–cysteine 21, cysteine 9–cysteine 23, and cysteine 14–cysteine 28.

Contains 3 disulfide bonds. In terms of processing, this is a cyclic peptide.

In terms of biological role, probably participates in a plant defense mechanism. The chain is Cyclotide cter-J from Clitoria ternatea (Butterfly pea).